A 121-amino-acid polypeptide reads, in one-letter code: MARIAGVDIPNDKRVVISLTYVYGIGLATSKKILAAAGISEDVRVKDLTSDQEDAIRREVDAIKVEGDLRREVNLNIKRLMEIGSYRGIRHRRGLPVRGQNTKNNARTRKGKAVAIAGKKK.

A disordered region spans residues Pro96–Lys121. The segment covering Ala106–Lys121 has biased composition (basic residues).

It belongs to the universal ribosomal protein uS13 family. Part of the 30S ribosomal subunit. Forms a loose heterodimer with protein S19. Forms two bridges to the 50S subunit in the 70S ribosome.

Located at the top of the head of the 30S subunit, it contacts several helices of the 16S rRNA. In the 70S ribosome it contacts the 23S rRNA (bridge B1a) and protein L5 of the 50S subunit (bridge B1b), connecting the 2 subunits; these bridges are implicated in subunit movement. Contacts the tRNAs in the A and P-sites. This chain is Small ribosomal subunit protein uS13, found in Streptococcus suis (strain 05ZYH33).